A 727-amino-acid polypeptide reads, in one-letter code: Elongation factor 2 (727 aa).

Residues 19–260 (DQIRNIGICA…MVVTHLPNPV (242 aa)) form the tr-type G domain. Residues 28–35 (AHIDHGKT), 94–98 (DTPGH), and 148–151 (NKVD) each bind GTP. H603 carries the post-translational modification Diphthamide.

It belongs to the TRAFAC class translation factor GTPase superfamily. Classic translation factor GTPase family. EF-G/EF-2 subfamily.

It localises to the cytoplasm. Functionally, catalyzes the GTP-dependent ribosomal translocation step during translation elongation. During this step, the ribosome changes from the pre-translocational (PRE) to the post-translocational (POST) state as the newly formed A-site-bound peptidyl-tRNA and P-site-bound deacylated tRNA move to the P and E sites, respectively. Catalyzes the coordinated movement of the two tRNA molecules, the mRNA and conformational changes in the ribosome. This chain is Elongation factor 2, found in Methanococcus aeolicus (strain ATCC BAA-1280 / DSM 17508 / OCM 812 / Nankai-3).